The following is a 355-amino-acid chain: Putative beta-lactamase HcpE (355 aa).

The signal sequence occupies residues 1–22 (MNIKILKILVGGLFFLSLNAHL). TPR repeat units lie at residues 27-60 (DNSF…GVSE), 63-96 (TQLG…DDRE), 98-131 (CFGL…LKHP), 132-166 (ESCY…DMAK), 202-240 (GQAC…NNSG), 245-275 (LGSM…MGSA), 276-311 (VSCS…MGDE), and 312-344 (VGCF…GMKQ). Disulfide bonds link C54–C62, C90–C98, C126–C134, C160–C168, C197–C205, C234–C242, C270–C278, C306–C314, and C338–C346.

The protein belongs to the hcp beta-lactamase family.

It is found in the secreted. The catalysed reaction is a beta-lactam + H2O = a substituted beta-amino acid. In terms of biological role, may hydrolyze 6-aminopenicillinic acid and 7-aminocephalosporanic acid (ACA) derivatives. The chain is Putative beta-lactamase HcpE (hcpE) from Helicobacter pylori (strain J99 / ATCC 700824) (Campylobacter pylori J99).